A 458-amino-acid polypeptide reads, in one-letter code: Ribulose bisphosphate carboxylase (458 aa).

Asn111 serves as a coordination point for substrate. Lys166 functions as the Proton acceptor in the catalytic mechanism. Residue Lys168 participates in substrate binding. Lys191, Asp193, and Glu194 together coordinate Mg(2+). Residue Lys191 is modified to N6-carboxylysine. The active-site Proton acceptor is the His287. The substrate site is built by Arg288, His321, and Ser368.

It belongs to the RuBisCO large chain family. Type II subfamily. As to quaternary structure, homodimer. It depends on Mg(2+) as a cofactor.

It carries out the reaction 2 (2R)-3-phosphoglycerate + 2 H(+) = D-ribulose 1,5-bisphosphate + CO2 + H2O. It catalyses the reaction D-ribulose 1,5-bisphosphate + O2 = 2-phosphoglycolate + (2R)-3-phosphoglycerate + 2 H(+). RuBisCO catalyzes two reactions: the carboxylation of D-ribulose 1,5-bisphosphate, the primary event in carbon dioxide fixation, as well as the oxidative fragmentation of the pentose substrate. Both reactions occur simultaneously and in competition at the same active site. This is Ribulose bisphosphate carboxylase (cbbM) from Rhodobacter capsulatus (Rhodopseudomonas capsulata).